Here is a 604-residue protein sequence, read N- to C-terminus: Glutamine--fructose-6-phosphate aminotransferase [isomerizing] (604 aa).

Cys-2 functions as the Nucleophile; for GATase activity in the catalytic mechanism. Residues 2–218 (CGIVGVVGNR…DKELVILTKD (217 aa)) enclose the Glutamine amidotransferase type-2 domain. 2 consecutive SIS domains span residues 284 to 423 (IVKT…ANGK) and 456 to 594 (VEKL…VDKP). Lys-599 acts as the For Fru-6P isomerization activity in catalysis.

Homodimer.

Its subcellular location is the cytoplasm. The catalysed reaction is D-fructose 6-phosphate + L-glutamine = D-glucosamine 6-phosphate + L-glutamate. In terms of biological role, catalyzes the first step in hexosamine metabolism, converting fructose-6P into glucosamine-6P using glutamine as a nitrogen source. The sequence is that of Glutamine--fructose-6-phosphate aminotransferase [isomerizing] from Streptococcus pyogenes serotype M6 (strain ATCC BAA-946 / MGAS10394).